We begin with the raw amino-acid sequence, 351 residues long: S-adenosylmethionine:tRNA ribosyltransferase-isomerase (351 aa).

It belongs to the QueA family. As to quaternary structure, monomer.

It is found in the cytoplasm. The catalysed reaction is 7-aminomethyl-7-carbaguanosine(34) in tRNA + S-adenosyl-L-methionine = epoxyqueuosine(34) in tRNA + adenine + L-methionine + 2 H(+). Its pathway is tRNA modification; tRNA-queuosine biosynthesis. Its function is as follows. Transfers and isomerizes the ribose moiety from AdoMet to the 7-aminomethyl group of 7-deazaguanine (preQ1-tRNA) to give epoxyqueuosine (oQ-tRNA). This is S-adenosylmethionine:tRNA ribosyltransferase-isomerase from Sphingopyxis alaskensis (strain DSM 13593 / LMG 18877 / RB2256) (Sphingomonas alaskensis).